Here is a 283-residue protein sequence, read N- to C-terminus: Bifunctional protein FolD (283 aa).

NADP(+) is bound by residues 163-165 (GRS), serine 188, and isoleucine 229.

Belongs to the tetrahydrofolate dehydrogenase/cyclohydrolase family. In terms of assembly, homodimer.

It catalyses the reaction (6R)-5,10-methylene-5,6,7,8-tetrahydrofolate + NADP(+) = (6R)-5,10-methenyltetrahydrofolate + NADPH. The catalysed reaction is (6R)-5,10-methenyltetrahydrofolate + H2O = (6R)-10-formyltetrahydrofolate + H(+). The protein operates within one-carbon metabolism; tetrahydrofolate interconversion. Catalyzes the oxidation of 5,10-methylenetetrahydrofolate to 5,10-methenyltetrahydrofolate and then the hydrolysis of 5,10-methenyltetrahydrofolate to 10-formyltetrahydrofolate. This Campylobacter concisus (strain 13826) protein is Bifunctional protein FolD.